An 83-amino-acid polypeptide reads, in one-letter code: Subtilisin-chymotrypsin inhibitor CI-1A (83 aa).

The interval 1-24 (MSSMEGSVLKYPEPTEGSIGASSA) is disordered.

This sequence belongs to the protease inhibitor I13 (potato type I serine protease inhibitor) family.

In terms of biological role, inhibits both subtilisin and chymotrypsin. This chain is Subtilisin-chymotrypsin inhibitor CI-1A, found in Hordeum vulgare (Barley).